We begin with the raw amino-acid sequence, 122 residues long: Ribonuclease P protein component (122 aa).

Belongs to the RnpA family. Consists of a catalytic RNA component (M1 or rnpB) and a protein subunit.

The enzyme catalyses Endonucleolytic cleavage of RNA, removing 5'-extranucleotides from tRNA precursor.. Its function is as follows. RNaseP catalyzes the removal of the 5'-leader sequence from pre-tRNA to produce the mature 5'-terminus. It can also cleave other RNA substrates such as 4.5S RNA. The protein component plays an auxiliary but essential role in vivo by binding to the 5'-leader sequence and broadening the substrate specificity of the ribozyme. In Halorhodospira halophila (strain DSM 244 / SL1) (Ectothiorhodospira halophila (strain DSM 244 / SL1)), this protein is Ribonuclease P protein component.